Here is a 153-residue protein sequence, read N- to C-terminus: Putative phosphatidylglycerol/phosphatidylinositol transfer protein DDB_G0285639 (153 aa).

The N-terminal stretch at 1–21 (MIIKILLLIISISLFLNISIG) is a signal peptide. Residues asparagine 17, asparagine 61, asparagine 87, asparagine 117, and asparagine 140 are each glycosylated (N-linked (GlcNAc...) asparagine).

Belongs to the NPC2 family. As to quaternary structure, monomer.

Functionally, catalyzes the intermembrane transfer of phosphatidylglycerol and phosphatidylinositol. This Dictyostelium discoideum (Social amoeba) protein is Putative phosphatidylglycerol/phosphatidylinositol transfer protein DDB_G0285639.